A 371-amino-acid chain; its full sequence is Queuine tRNA-ribosyltransferase (371 aa).

Asp-90 serves as the catalytic Proton acceptor. Residues 90 to 94, Asp-144, Gln-188, and Gly-215 each bind substrate; that span reads DSGGF. The tract at residues 246-252 is RNA binding; it reads GVGTPED. Asp-265 acts as the Nucleophile in catalysis. The segment at 270–274 is RNA binding; important for wobble base 34 recognition; the sequence is TRNAR. Zn(2+) contacts are provided by Cys-303, Cys-305, Cys-308, and His-334.

This sequence belongs to the queuine tRNA-ribosyltransferase family. In terms of assembly, homodimer. Within each dimer, one monomer is responsible for RNA recognition and catalysis, while the other monomer binds to the replacement base PreQ1. The cofactor is Zn(2+).

It carries out the reaction 7-aminomethyl-7-carbaguanine + guanosine(34) in tRNA = 7-aminomethyl-7-carbaguanosine(34) in tRNA + guanine. Its pathway is tRNA modification; tRNA-queuosine biosynthesis. In terms of biological role, catalyzes the base-exchange of a guanine (G) residue with the queuine precursor 7-aminomethyl-7-deazaguanine (PreQ1) at position 34 (anticodon wobble position) in tRNAs with GU(N) anticodons (tRNA-Asp, -Asn, -His and -Tyr). Catalysis occurs through a double-displacement mechanism. The nucleophile active site attacks the C1' of nucleotide 34 to detach the guanine base from the RNA, forming a covalent enzyme-RNA intermediate. The proton acceptor active site deprotonates the incoming PreQ1, allowing a nucleophilic attack on the C1' of the ribose to form the product. After dissociation, two additional enzymatic reactions on the tRNA convert PreQ1 to queuine (Q), resulting in the hypermodified nucleoside queuosine (7-(((4,5-cis-dihydroxy-2-cyclopenten-1-yl)amino)methyl)-7-deazaguanosine). The polypeptide is Queuine tRNA-ribosyltransferase (Chromobacterium violaceum (strain ATCC 12472 / DSM 30191 / JCM 1249 / CCUG 213 / NBRC 12614 / NCIMB 9131 / NCTC 9757 / MK)).